The sequence spans 374 residues: UPF0754 membrane protein SAB1779c (374 aa).

A run of 2 helical transmembrane segments spans residues 4–24 (LFII…TNVI) and 354–374 (SLGF…AIFV).

The protein belongs to the UPF0754 family.

It localises to the cell membrane. The polypeptide is UPF0754 membrane protein SAB1779c (Staphylococcus aureus (strain bovine RF122 / ET3-1)).